A 227-amino-acid chain; its full sequence is 7-cyano-7-deazaguanine synthase (227 aa).

8 to 18 lines the ATP pocket; sequence VSGGADSATVL. The Zn(2+) site is built by Cys192, Cys202, Cys205, and Cys208.

The protein belongs to the QueC family. Zn(2+) is required as a cofactor.

The enzyme catalyses 7-carboxy-7-deazaguanine + NH4(+) + ATP = 7-cyano-7-deazaguanine + ADP + phosphate + H2O + H(+). It functions in the pathway purine metabolism; 7-cyano-7-deazaguanine biosynthesis. Catalyzes the ATP-dependent conversion of 7-carboxy-7-deazaguanine (CDG) to 7-cyano-7-deazaguanine (preQ(0)). This Rickettsia canadensis (strain McKiel) protein is 7-cyano-7-deazaguanine synthase.